Here is a 227-residue protein sequence, read N- to C-terminus: 2,3-bisphosphoglycerate-dependent phosphoglycerate mutase (227 aa).

Residues 7–14 (RHGQSEWN), 20–21 (TG), R59, 86–89 (ERHY), K97, 113–114 (RR), and 182–183 (GN) each bind substrate. The active-site Tele-phosphohistidine intermediate is the H8. E86 (proton donor/acceptor) is an active-site residue.

It belongs to the phosphoglycerate mutase family. BPG-dependent PGAM subfamily. In terms of assembly, homodimer.

It catalyses the reaction (2R)-2-phosphoglycerate = (2R)-3-phosphoglycerate. The protein operates within carbohydrate degradation; glycolysis; pyruvate from D-glyceraldehyde 3-phosphate: step 3/5. Its function is as follows. Catalyzes the interconversion of 2-phosphoglycerate and 3-phosphoglycerate. The polypeptide is 2,3-bisphosphoglycerate-dependent phosphoglycerate mutase (Neisseria meningitidis serogroup A / serotype 4A (strain DSM 15465 / Z2491)).